The chain runs to 206 residues: Pro-glucagon (206 aa).

The first 22 residues, 1–22 (MKMKSIYFIAGLLLMIVQGSWQ), serve as a signal peptide directing secretion. The tract at residues 27-57 (DTEEKSRSFKASQSEPLDESRQLNEVKRHSQ) is disordered. Positions 44–54 (DESRQLNEVKR) are enriched in basic and acidic residues. A propeptide spanning residues 86–109 (NGQQGQEDKENDKFPDQLSSNAIS) is cleaved from the precursor. Arg147 carries the arginine amide modification. 2 consecutive propeptides follow at residues 151 to 163 (DFPE…EEMG) and 199 to 206 (RDLLGEYQ).

The protein belongs to the glucagon family. Post-translationally, proglucagon is post-translationally processed in a tissue-specific manner in pancreatic A cells and intestinal L cells. In pancreatic A cells, the major bioactive hormone is glucagon cleaved by PCSK2/PC2. In the intestinal L cells PCSK1/PC1 liberates GLP-1 and GLP-2. GLP-1 is further N-terminally truncated by post-translational processing in the intestinal L cells resulting in GLP-1(7-37) GLP-1-(7-36)amide.

The protein resides in the secreted. Plays a key role in glucose metabolism and homeostasis. Regulates blood glucose by increasing gluconeogenesis and decreasing glycolysis. In terms of biological role, potent stimulator of glucose-dependent insulin release. Plays important roles on gastric motility and the suppression of plasma glucagon levels. May be involved in the suppression of satiety and stimulation of glucose disposal in peripheral tissues, independent of the actions of insulin. Has growth-promoting activities on intestinal epithelium. May also regulate the hypothalamic pituitary axis (HPA) via effects on LH, TSH, CRH, oxytocin, and vasopressin secretion. Increases islet mass through stimulation of islet neogenesis and pancreatic beta cell proliferation. Its function is as follows. Stimulates intestinal growth and up-regulates villus height in the small intestine, concomitant with increased crypt cell proliferation and decreased enterocyte apoptosis. The gastrointestinal tract, from the stomach to the colon is the principal target for GLP-2 action. Plays a key role in nutrient homeostasis, enhancing nutrient assimilation through enhanced gastrointestinal function, as well as increasing nutrient disposal. Stimulates intestinal glucose transport and decreases mucosal permeability. This is Pro-glucagon (GCG) from Gallus gallus (Chicken).